A 541-amino-acid polypeptide reads, in one-letter code: Glucose-6-phosphate isomerase (541 aa).

Glu-354 serves as the catalytic Proton donor. Active-site residues include His-385 and Lys-505.

The protein belongs to the GPI family.

It localises to the cytoplasm. It carries out the reaction alpha-D-glucose 6-phosphate = beta-D-fructose 6-phosphate. Its pathway is carbohydrate biosynthesis; gluconeogenesis. The protein operates within carbohydrate degradation; glycolysis; D-glyceraldehyde 3-phosphate and glycerone phosphate from D-glucose: step 2/4. Catalyzes the reversible isomerization of glucose-6-phosphate to fructose-6-phosphate. In Cupriavidus metallidurans (strain ATCC 43123 / DSM 2839 / NBRC 102507 / CH34) (Ralstonia metallidurans), this protein is Glucose-6-phosphate isomerase.